The primary structure comprises 376 residues: UPF0754 membrane protein BH1148 (376 aa).

The next 2 helical transmembrane spans lie at 3 to 23 (LILF…SLAI) and 355 to 375 (YLGA…ILLI).

Belongs to the UPF0754 family.

It localises to the cell membrane. This is UPF0754 membrane protein BH1148 from Halalkalibacterium halodurans (strain ATCC BAA-125 / DSM 18197 / FERM 7344 / JCM 9153 / C-125) (Bacillus halodurans).